Consider the following 366-residue polypeptide: Phenylalanine--tRNA ligase alpha subunit (366 aa).

Glutamate 259 is a Mg(2+) binding site.

It belongs to the class-II aminoacyl-tRNA synthetase family. Phe-tRNA synthetase alpha subunit type 1 subfamily. As to quaternary structure, tetramer of two alpha and two beta subunits. Mg(2+) is required as a cofactor.

The protein resides in the cytoplasm. The enzyme catalyses tRNA(Phe) + L-phenylalanine + ATP = L-phenylalanyl-tRNA(Phe) + AMP + diphosphate + H(+). The polypeptide is Phenylalanine--tRNA ligase alpha subunit (Novosphingobium aromaticivorans (strain ATCC 700278 / DSM 12444 / CCUG 56034 / CIP 105152 / NBRC 16084 / F199)).